A 151-amino-acid polypeptide reads, in one-letter code: Putative pre-16S rRNA nuclease (151 aa).

The protein belongs to the YqgF nuclease family.

Its subcellular location is the cytoplasm. In terms of biological role, could be a nuclease involved in processing of the 5'-end of pre-16S rRNA. This chain is Putative pre-16S rRNA nuclease, found in Bifidobacterium longum subsp. infantis (strain ATCC 15697 / DSM 20088 / JCM 1222 / NCTC 11817 / S12).